Consider the following 134-residue polypeptide: Replication enhancer protein (134 aa).

It belongs to the geminiviridae replication enhancer protein family. Homooligomer. Interacts with the replication-associated protein (REP). Interacts with host proliferating cell nuclear antigen (PCNA). Interacts with host retinoblastoma-related protein 1 (RBR1), and may thereby deregulate the host cell cycle. Oligomerization and interaction with PCNA are necessary for optimal replication enhancement.

Functionally, increases viral DNA accumulation. Enhances infectivity and symptom expression. The protein is Replication enhancer protein of Solanum lycopersicum (Tomato).